We begin with the raw amino-acid sequence, 359 residues long: Phosphoribosylformylglycinamidine cyclo-ligase (359 aa).

It belongs to the AIR synthase family.

Its subcellular location is the cytoplasm. The enzyme catalyses 2-formamido-N(1)-(5-O-phospho-beta-D-ribosyl)acetamidine + ATP = 5-amino-1-(5-phospho-beta-D-ribosyl)imidazole + ADP + phosphate + H(+). The protein operates within purine metabolism; IMP biosynthesis via de novo pathway; 5-amino-1-(5-phospho-D-ribosyl)imidazole from N(2)-formyl-N(1)-(5-phospho-D-ribosyl)glycinamide: step 2/2. The sequence is that of Phosphoribosylformylglycinamidine cyclo-ligase from Brucella canis (strain ATCC 23365 / NCTC 10854 / RM-666).